Reading from the N-terminus, the 394-residue chain is Elongation factor Tu-A (394 aa).

The 195-residue stretch at 10–204 (KPHVNVGTIG…ALDTYIPEPE (195 aa)) folds into the tr-type G domain. The G1 stretch occupies residues 19–26 (GHVDHGKT). 19–26 (GHVDHGKT) lines the GTP pocket. Thr26 is a Mg(2+) binding site. A G2 region spans residues 60–64 (GITIN). The G3 stretch occupies residues 81 to 84 (DCPG). Residues 81 to 85 (DCPGH) and 136 to 139 (NKCD) each bind GTP. The segment at 136–139 (NKCD) is G4. The segment at 174 to 176 (SAL) is G5.

This sequence belongs to the TRAFAC class translation factor GTPase superfamily. Classic translation factor GTPase family. EF-Tu/EF-1A subfamily. In terms of assembly, monomer.

The protein localises to the cytoplasm. The enzyme catalyses GTP + H2O = GDP + phosphate + H(+). Functionally, GTP hydrolase that promotes the GTP-dependent binding of aminoacyl-tRNA to the A-site of ribosomes during protein biosynthesis. The sequence is that of Elongation factor Tu-A from Vibrio cholerae serotype O1 (strain ATCC 39315 / El Tor Inaba N16961).